Here is a 138-residue protein sequence, read N- to C-terminus: ATP synthase epsilon chain (138 aa).

This sequence belongs to the ATPase epsilon chain family. As to quaternary structure, F-type ATPases have 2 components, CF(1) - the catalytic core - and CF(0) - the membrane proton channel. CF(1) has five subunits: alpha(3), beta(3), gamma(1), delta(1), epsilon(1). CF(0) has three main subunits: a, b and c.

It localises to the cell inner membrane. Its function is as follows. Produces ATP from ADP in the presence of a proton gradient across the membrane. The polypeptide is ATP synthase epsilon chain (Polaromonas naphthalenivorans (strain CJ2)).